We begin with the raw amino-acid sequence, 416 residues long: Tyrosine--tRNA ligase (416 aa).

Tyrosine 40 provides a ligand contact to L-tyrosine. Positions 45–54 (ATAASLHVGH) match the 'HIGH' region motif. L-tyrosine is bound by residues tyrosine 177 and glutamine 181. The short motif at 237–241 (KMGKS) is the 'KMSKS' region element. Lysine 240 is a binding site for ATP. Residues 351–416 (LSVAHFLVAA…RKKHKLVRLS (66 aa)) form the S4 RNA-binding domain.

It belongs to the class-I aminoacyl-tRNA synthetase family. TyrS type 1 subfamily. Homodimer.

It is found in the cytoplasm. It carries out the reaction tRNA(Tyr) + L-tyrosine + ATP = L-tyrosyl-tRNA(Tyr) + AMP + diphosphate + H(+). In terms of biological role, catalyzes the attachment of tyrosine to tRNA(Tyr) in a two-step reaction: tyrosine is first activated by ATP to form Tyr-AMP and then transferred to the acceptor end of tRNA(Tyr). This is Tyrosine--tRNA ligase from Cereibacter sphaeroides (strain ATCC 17029 / ATH 2.4.9) (Rhodobacter sphaeroides).